Reading from the N-terminus, the 389-residue chain is Probable family 17 glucosidase SCW10 (389 aa).

The N-terminal stretch at 1-18 (MRFSNFLTVSALLTGALG) is a signal peptide. Positions 19–29 (APAVRHKHEKR) are excised as a propeptide. A disordered region spans residues 70-134 (ASQATTSTLE…SSASSSISAS (65 aa)). The N-linked (GlcNAc...) asparagine glycan is linked to asparagine 279. Glutamate 326 acts as the Nucleophile in catalysis.

This sequence belongs to the glycosyl hydrolase 17 family. Glycosylated.

It localises to the secreted. The protein resides in the cell wall. Functionally, glucanases possibly play a role in cell expansion during growth, in cell-cell fusion during mating, and in spore release during sporulation. The chain is Probable family 17 glucosidase SCW10 (SCW10) from Saccharomyces cerevisiae (strain ATCC 204508 / S288c) (Baker's yeast).